The following is a 215-amino-acid chain: Cytochrome b6 (215 aa).

A helical transmembrane segment spans residues 32–52; the sequence is IFYCLGGITLTCFLVQVATGF. Cys35 is a heme c binding site. 2 residues coordinate heme b: His86 and His100. 3 helical membrane passes run 90–110, 116–136, and 186–206; these read ASMM…TGGF, LTWV…VTGY, and LHTF…FPMI. Residues His187 and His202 each contribute to the heme b site.

The protein belongs to the cytochrome b family. PetB subfamily. In terms of assembly, the 4 large subunits of the cytochrome b6-f complex are cytochrome b6, subunit IV (17 kDa polypeptide, PetD), cytochrome f and the Rieske protein, while the 4 small subunits are PetG, PetL, PetM and PetN. The complex functions as a dimer. The cofactor is heme b. Heme c serves as cofactor.

Its subcellular location is the plastid. The protein resides in the chloroplast thylakoid membrane. Its function is as follows. Component of the cytochrome b6-f complex, which mediates electron transfer between photosystem II (PSII) and photosystem I (PSI), cyclic electron flow around PSI, and state transitions. The protein is Cytochrome b6 of Daucus carota (Wild carrot).